The sequence spans 403 residues: S-arrestin (403 aa).

Position 231 is a phosphothreonine (threonine 231). Residues 381 to 403 (RQNLKDTGENTEGKKDEDAGQDE) are disordered.

The protein belongs to the arrestin family. As to quaternary structure, monomer. Homodimer. Homotetramer. Interacts with RHO (via the phosphorylated C-terminus). In terms of tissue distribution, retina and pineal gland.

It localises to the cell projection. Its subcellular location is the cilium. The protein resides in the photoreceptor outer segment. It is found in the membrane. Functionally, binds to photoactivated, phosphorylated RHO and terminates RHO signaling via G-proteins by competing with G-proteins for the same binding site on RHO. May play a role in preventing light-dependent degeneration of retinal photoreceptor cells. This Rattus norvegicus (Rat) protein is S-arrestin (Sag).